A 132-amino-acid polypeptide reads, in one-letter code: Small ribosomal subunit protein uS8 (132 aa).

The protein belongs to the universal ribosomal protein uS8 family. In terms of assembly, part of the 30S ribosomal subunit. Contacts proteins S5 and S12.

One of the primary rRNA binding proteins, it binds directly to 16S rRNA central domain where it helps coordinate assembly of the platform of the 30S subunit. In Rickettsia massiliae (strain Mtu5), this protein is Small ribosomal subunit protein uS8.